Consider the following 445-residue polypeptide: Phosphoglucosamine mutase (445 aa).

Residue Ser-99 is the Phosphoserine intermediate of the active site. Ser-99, Asp-242, Asp-244, and Asp-246 together coordinate Mg(2+). Ser-99 carries the post-translational modification Phosphoserine.

Belongs to the phosphohexose mutase family. Requires Mg(2+) as cofactor. Activated by phosphorylation.

The catalysed reaction is alpha-D-glucosamine 1-phosphate = D-glucosamine 6-phosphate. Its function is as follows. Catalyzes the conversion of glucosamine-6-phosphate to glucosamine-1-phosphate. In Helicobacter pylori (strain G27), this protein is Phosphoglucosamine mutase.